The chain runs to 120 residues: Large ribosomal subunit protein bL20 (120 aa).

Belongs to the bacterial ribosomal protein bL20 family.

Functionally, binds directly to 23S ribosomal RNA and is necessary for the in vitro assembly process of the 50S ribosomal subunit. It is not involved in the protein synthesizing functions of that subunit. This Cereibacter sphaeroides (strain ATCC 17025 / ATH 2.4.3) (Rhodobacter sphaeroides) protein is Large ribosomal subunit protein bL20.